Reading from the N-terminus, the 1303-residue chain is MEAAPGTPPPPPSESPPPPSPPPPSTPSPPPCSPDARPATPHLLHHRLPLPDDREDGELEEGELEDDGAEETQDTSGGPERSRKEKGEKHHSDSDEEKSHRRLKRKRKKEREKEKRRSKKRRKSKHKRHASSSDDFSDFSDDSDFSPSEKGHRKYREYSPPYAPSHQQYPPSHATPLPKKAYSKMDSKSYGMYEDYENEQYGEYEGDEEEDMGKEDYDDFTKELNQYRRAKEGSSRGRGSRGRGRGYRGRGSRGGSRGRGMGRGSRGRGRGSMGGDHPEDEEDFYEEEMDYGESEEPMGDDDYDEYSKELNQYRRSKDSRGRGLSRGRGRGSRGRGKGMGRGRGRGGSRGGMNKGGMNDDEDFYDEDMGDGGGGSYRSRDHDKPHQQSDKKGKVICKYFVEGRCTWGDHCNFSHDIELPKKRELCKFYITGFCARAENCPYMHGDFPCKLYHTTGNCINGDDCMFSHDPLTEETRELLDKMLADDAEAGAEDEKEVEELKKQGINPLPKPPPGVGLLPTPPRPPGPQAPTSPNGRPMQGGPPPPPPPPPPPPGPPQMPMPVHEPLSPQQLQQQDMYNKKIPSLFEIVVRPTGQLAEKLGVRFPGPGGPPGPMGPGPNMGPPGPMGGPMHPDMHPDMHPDMHPDMHADMHADMPMGPGMNPGPPMGPGGPPMMPYGPGDSPHSGMMPPIPPAQNFYENFYQQQEGMEMEPGLLGDAEDYGHYEELPGEPGEHLFPEHPLEPDSFSEGGPPGRPKPGAGVPDFLPSAQRALYLRIQQKQQEEEERARRLAESSKQDRENEEGDTGNWYSSDEDEGGSSVTSILKTLRQQTSSRPPASVGELSSSGLGDPRLQKGHPTGSRLADPRLSRDPRLTRHVEASGGSGPGDSGPSDPRLARALPTSKPEGSLHSSPVGPSSSKGSGPPPTEEEEGERALREKAVNIPLDPLPGHPLRDPRSQLQQFSHIKKDVTLSKPSFARTVLWNPEDLIPLPIPKQDAVPPVPAALQSMPTLDPRLHRAATAGPPNARQRPGASTDSSTQGANLPDFELLSRILKTVNATGSSAAPGSSDKPSDPRVRKAPTDPRLQKPTDSTASSRAAKPGPAEAPSPTASPSGDASPPATAPYDPRVLAAGGLGQGGGGGQSSVLSGISLYDPRTPNAGGKATEPAADTGAQPKGAEGNGKSSASKAKEPPFVRKSALEQPETGKAGADGGTPTDRYNSYNRPRPKAAAAPAATTATPPPEGAPPQPGVHNLPVPTLFGTVKQTPKTGSGSPFAGNSPAREGEQDAASLKDVFKGFDPTASPFCQ.

A compositionally biased stretch (pro residues) spans 1–33; the sequence is MEAAPGTPPPPPSESPPPPSPPPPSTPSPPPCS. The tract at residues 1-388 is disordered; that stretch reads MEAAPGTPPP…RDHDKPHQQS (388 aa). Acidic residues predominate over residues 53-73; that stretch reads DREDGELEEGELEDDGAEETQ. 2 positions are modified to phosphothreonine: T72 and T75. Phosphoserine is present on residues S76, S92, and S94. A compositionally biased stretch (basic and acidic residues) spans 80-99; sequence ERSRKEKGEKHHSDSDEEKS. Residues 95–128 are a coiled coil; sequence DEEKSHRRLKRKRKKEREKEKRRSKKRRKSKHKR. The span at 100 to 130 shows a compositional bias: basic residues; the sequence is HRRLKRKRKKEREKEKRRSKKRRKSKHKRHA. Acidic residues predominate over residues 135–144; the sequence is DFSDFSDDSD. Y155 is modified (phosphotyrosine). Residues 194 to 218 show a composition bias toward acidic residues; it reads EDYENEQYGEYEGDEEEDMGKEDYD. Residues 219–235 are compositionally biased toward basic and acidic residues; it reads DFTKELNQYRRAKEGSS. Residues 238 to 251 show a composition bias toward basic residues; that stretch reads RGSRGRGRGYRGRG. Residues 252–274 are compositionally biased toward gly residues; it reads SRGGSRGRGMGRGSRGRGRGSMG. Residues 278-304 are compositionally biased toward acidic residues; that stretch reads PEDEEDFYEEEMDYGESEEPMGDDDYD. A compositionally biased stretch (basic and acidic residues) spans 305 to 321; the sequence is EYSKELNQYRRSKDSRG. Positions 323 to 346 are enriched in basic residues; it reads GLSRGRGRGSRGRGKGMGRGRGRG. Acidic residues predominate over residues 358 to 369; sequence NDDEDFYDEDMG. Positions 377 to 388 are enriched in basic and acidic residues; that stretch reads RSRDHDKPHQQS. 3 consecutive C3H1-type zinc fingers follow at residues 390 to 417, 419 to 446, and 447 to 470; these read KKGK…HDIE, PKKR…HGDF, and PCKL…HDPL. A compositionally biased stretch (acidic residues) spans 486 to 496; it reads AEAGAEDEKEV. The segment at 486 to 571 is disordered; that stretch reads AEAGAEDEKE…HEPLSPQQLQ (86 aa). Pro residues-rich tracts occupy residues 507–529 and 539–558; these read LPKP…PQAP and GGPP…PQMP. Position 601 is an asymmetric dimethylarginine (R601). Residues 605-624 are compositionally biased toward pro residues; the sequence is PGGPPGPMGPGPNMGPPGPM. Disordered regions lie at residues 605–685, 710–955, and 996–1288; these read PGGP…SGMM, GLLG…PRSQ, and PPVP…ASLK. The span at 630 to 650 shows a compositional bias: basic and acidic residues; sequence PDMHPDMHPDMHPDMHADMHA. The segment covering 659-673 has biased composition (pro residues); sequence NPGPPMGPGGPPMMP. Composition is skewed to basic and acidic residues over residues 717 to 739 and 782 to 795; these read DYGH…HPLE and ERAR…KQDR. The stretch at 767–800 forms a coiled coil; it reads RALYLRIQQKQQEEEERARRLAESSKQDRENEEG. Phosphoserine occurs at positions 807 and 808. The span at 815–843 shows a compositional bias: polar residues; sequence SSVTSILKTLRQQTSSRPPASVGELSSSG. The span at 860–875 shows a compositional bias: basic and acidic residues; sequence ADPRLSRDPRLTRHVE. Residues S904, S907, and S908 each carry the phosphoserine modification. The span at 904–918 shows a compositional bias: low complexity; it reads SLHSSPVGPSSSKGS. Polar residues-rich tracts occupy residues 1028–1038 and 1053–1062; these read GASTDSSTQGA and VNATGSSAAP. Basic and acidic residues predominate over residues 1067–1084; sequence KPSDPRVRKAPTDPRLQK. The span at 1097–1110 shows a compositional bias: low complexity; that stretch reads PGPAEAPSPTASPS. A Phosphoserine modification is found at S1104. T1106 bears the Phosphothreonine mark. S1108, S1110, and S1114 each carry phosphoserine. T1118 is subject to Phosphothreonine. Gly residues predominate over residues 1129 to 1139; it reads GGLGQGGGGGQ. A compositionally biased stretch (low complexity) spans 1224-1234; that stretch reads KAAAAPAATTA. Positions 1235-1245 are enriched in pro residues; that stretch reads TPPPEGAPPQP. Positions 1259–1268 are enriched in polar residues; the sequence is VKQTPKTGSG. Residues S1269 and S1275 each carry the phosphoserine modification.

It belongs to the suppressor of sable family. In terms of assembly, interacts with WDR82.

It is found in the chromosome. RNA-binding protein that suppresses transcription of long non-coding RNAs (lncRNAs). LncRNAs are defined as transcripts more than 200 nucleotides that are not translated into protein. Together with WDR82, part of a transcription termination checkpoint that promotes transcription termination of lncRNAs and their subsequent degradation by the exosome. The transcription termination checkpoint is activated by the inefficiently spliced first exon of lncRNAs. The protein is Zinc finger CCCH domain-containing protein 4 of Homo sapiens (Human).